The primary structure comprises 253 residues: tRNA pseudouridine synthase A (253 aa).

Catalysis depends on aspartate 53, which acts as the Nucleophile. Tyrosine 111 is a binding site for substrate.

It belongs to the tRNA pseudouridine synthase TruA family. In terms of assembly, homodimer.

It carries out the reaction uridine(38/39/40) in tRNA = pseudouridine(38/39/40) in tRNA. Its function is as follows. Formation of pseudouridine at positions 38, 39 and 40 in the anticodon stem and loop of transfer RNAs. This Oceanobacillus iheyensis (strain DSM 14371 / CIP 107618 / JCM 11309 / KCTC 3954 / HTE831) protein is tRNA pseudouridine synthase A.